The chain runs to 259 residues: Deoxyribose-phosphate aldolase (259 aa).

Asp-102 serves as the catalytic Proton donor/acceptor. Lys-167 serves as the catalytic Schiff-base intermediate with acetaldehyde. Lys-201 (proton donor/acceptor) is an active-site residue.

The protein belongs to the DeoC/FbaB aldolase family. DeoC type 2 subfamily.

It is found in the cytoplasm. It carries out the reaction 2-deoxy-D-ribose 5-phosphate = D-glyceraldehyde 3-phosphate + acetaldehyde. It functions in the pathway carbohydrate degradation; 2-deoxy-D-ribose 1-phosphate degradation; D-glyceraldehyde 3-phosphate and acetaldehyde from 2-deoxy-alpha-D-ribose 1-phosphate: step 2/2. Its function is as follows. Catalyzes a reversible aldol reaction between acetaldehyde and D-glyceraldehyde 3-phosphate to generate 2-deoxy-D-ribose 5-phosphate. The sequence is that of Deoxyribose-phosphate aldolase from Serratia proteamaculans (strain 568).